The primary structure comprises 109 residues: T cell receptor alpha variable 26-1 (109 aa).

The signal sequence occupies residues 1-19 (MRLVARVTVFLTFGTIIDA). The Ig-like domain maps to 20 to 109 (KTTQPTSMDC…TAVYYCIVRV (90 aa)). An intrachain disulfide couples C39 to C105. N40 and N71 each carry an N-linked (GlcNAc...) asparagine glycan.

As to quaternary structure, alpha-beta TR is a heterodimer composed of an alpha and beta chain; disulfide-linked. The alpha-beta TR is associated with the transmembrane signaling CD3 coreceptor proteins to form the TR-CD3 (TcR or TCR). The assembly of alpha-beta TR heterodimers with CD3 occurs in the endoplasmic reticulum where a single alpha-beta TR heterodimer associates with one CD3D-CD3E heterodimer, one CD3G-CD3E heterodimer and one CD247 homodimer forming a stable octameric structure. CD3D-CD3E and CD3G-CD3E heterodimers preferentially associate with TR alpha and TR beta chains, respectively. The association of the CD247 homodimer is the last step of TcR assembly in the endoplasmic reticulum and is required for transport to the cell surface.

Its subcellular location is the cell membrane. V region of the variable domain of T cell receptor (TR) alpha chain that participates in the antigen recognition. Alpha-beta T cell receptors are antigen specific receptors which are essential to the immune response and are present on the cell surface of T lymphocytes. Recognize peptide-major histocompatibility (MH) (pMH) complexes that are displayed by antigen presenting cells (APC), a prerequisite for efficient T cell adaptive immunity against pathogens. Binding of alpha-beta TR to pMH complex initiates TR-CD3 clustering on the cell surface and intracellular activation of LCK that phosphorylates the ITAM motifs of CD3G, CD3D, CD3E and CD247 enabling the recruitment of ZAP70. In turn ZAP70 phosphorylates LAT, which recruits numerous signaling molecules to form the LAT signalosome. The LAT signalosome propagates signal branching to three major signaling pathways, the calcium, the mitogen-activated protein kinase (MAPK) kinase and the nuclear factor NF-kappa-B (NF-kB) pathways, leading to the mobilization of transcription factors that are critical for gene expression and essential for T cell growth and differentiation. The T cell repertoire is generated in the thymus, by V-(D)-J rearrangement. This repertoire is then shaped by intrathymic selection events to generate a peripheral T cell pool of self-MH restricted, non-autoaggressive T cells. Post-thymic interaction of alpha-beta TR with the pMH complexes shapes TR structural and functional avidity. The protein is T cell receptor alpha variable 26-1 of Homo sapiens (Human).